The chain runs to 1299 residues: MAP3K epsilon protein kinase 1 (1299 aa).

A Protein kinase domain is found at 20–274; sequence YMLGDEIGKG…AKTLLSHPWI (255 aa). HEAT repeat units lie at residues 25-62 and 86-125; these read EIGK…EDLN and LKTK…TVYI. ATP-binding positions include 26–34 and lysine 49; that span reads IGKGAYGRV. The active-site Proton acceptor is the aspartate 144. The stretch at 218–256 is one HEAT 3 repeat; the sequence is PYYDLQPMPALFRIVQDDSPPIPDSLSPDITDFLRQCFK. 2 disordered regions span residues 291-458 and 483-509; these read IRYM…GNEL and GKLN…DGGK. Residues 374-385 show a composition bias toward low complexity; sequence SSLQSSTCSISS. Composition is skewed to polar residues over residues 415–432 and 488–501; these read ATKQ…QRSH and ASAS…NQGD. HEAT repeat units follow at residues 532–570, 611–649, 653–694, 698–736, 743–780, 781–820, 868–900, 901–939, 955–994, 998–1036, 1043–1081, 1085–1122, 1125–1164, 1186–1210, 1211–1249, and 1279–1299; these read SNDG…LLPL, VFVT…DNID, NACL…SSSL, MFIA…VFKL, NDFC…SGQL, DQHE…PDGD, QPEQ…HIAG, LEKH…AASA, SDTS…ADTT, YMCS…DPNC, ADAI…INKR, QAAE…ASRN, EQLR…NDNR, CPER…RINT, TLAV…HHPR, and QVLV…NTVL. Positions 795 to 852 are disordered; that stretch reads VLKTRPGGGEEPSNSQRSDLYQPDGDRPRSSSAALDATEDVKQHHRISISSNRTSTDK.

This sequence belongs to the protein kinase superfamily. Ser/Thr protein kinase family. Autophosphorylated. As to expression, expressed in both the sporophytic and the gametophytic tissues, especially in dividing cells.

The protein resides in the cytoplasm. It localises to the cytoskeleton. It is found in the microtubule organizing center. Its subcellular location is the nucleus. The protein localises to the nucleolus. The protein resides in the cell membrane. It catalyses the reaction L-seryl-[protein] + ATP = O-phospho-L-seryl-[protein] + ADP + H(+). It carries out the reaction L-threonyl-[protein] + ATP = O-phospho-L-threonyl-[protein] + ADP + H(+). In terms of biological role, serine/threonine-protein kinase involved in the spatial and temporal control system organizing cortical activities in mitotic and postmitotic cells. Required for the normal functioning of the plasma membrane in developing pollen. Involved in the regulation of cell expansion and embryo development. In Brassica napus (Rape), this protein is MAP3K epsilon protein kinase 1.